A 197-amino-acid polypeptide reads, in one-letter code: Holliday junction branch migration complex subunit RuvA (197 aa).

Residues 1 to 63 form a domain I region; the sequence is MINKIHGKVI…ENELKLFGFL (63 aa). The tract at residues 64 to 139 is domain II; sequence NSDEREIFKE…KLLINSELES (76 aa). Residue Ser-139 is a region of interest, flexible linker. The segment at 140-197 is domain III; it reads TGLFRFKELEESIVSMGFDRKIVNSKIREAFNLAEFANLKDSEKEQFLFKEVLKRISN.

The protein belongs to the RuvA family. As to quaternary structure, homotetramer. Forms an RuvA(8)-RuvB(12)-Holliday junction (HJ) complex. HJ DNA is sandwiched between 2 RuvA tetramers; dsDNA enters through RuvA and exits via RuvB. An RuvB hexamer assembles on each DNA strand where it exits the tetramer. Each RuvB hexamer is contacted by two RuvA subunits (via domain III) on 2 adjacent RuvB subunits; this complex drives branch migration. In the full resolvosome a probable DNA-RuvA(4)-RuvB(12)-RuvC(2) complex forms which resolves the HJ.

The protein localises to the cytoplasm. Its function is as follows. The RuvA-RuvB-RuvC complex processes Holliday junction (HJ) DNA during genetic recombination and DNA repair, while the RuvA-RuvB complex plays an important role in the rescue of blocked DNA replication forks via replication fork reversal (RFR). RuvA specifically binds to HJ cruciform DNA, conferring on it an open structure. The RuvB hexamer acts as an ATP-dependent pump, pulling dsDNA into and through the RuvAB complex. HJ branch migration allows RuvC to scan DNA until it finds its consensus sequence, where it cleaves and resolves the cruciform DNA. The sequence is that of Holliday junction branch migration complex subunit RuvA from Borreliella burgdorferi (strain ATCC 35210 / DSM 4680 / CIP 102532 / B31) (Borrelia burgdorferi).